Consider the following 210-residue polypeptide: Ribosomal RNA small subunit methyltransferase G (210 aa).

Residues Gly74, Phe79, 127–128 (IE), and Arg143 contribute to the S-adenosyl-L-methionine site.

Belongs to the methyltransferase superfamily. RNA methyltransferase RsmG family.

Its subcellular location is the cytoplasm. It catalyses the reaction guanosine(527) in 16S rRNA + S-adenosyl-L-methionine = N(7)-methylguanosine(527) in 16S rRNA + S-adenosyl-L-homocysteine. Its function is as follows. Specifically methylates the N7 position of guanine in position 527 of 16S rRNA. This is Ribosomal RNA small subunit methyltransferase G from Chelativorans sp. (strain BNC1).